Consider the following 256-residue polypeptide: Triosephosphate isomerase (256 aa).

Residue 9–11 (NWK) participates in substrate binding. Residue His97 is the Electrophile of the active site. The active-site Proton acceptor is the Glu169. Substrate-binding positions include Gly175, Ser214, and 235 to 236 (GG).

It belongs to the triosephosphate isomerase family. Homodimer.

The protein localises to the cytoplasm. It carries out the reaction D-glyceraldehyde 3-phosphate = dihydroxyacetone phosphate. It functions in the pathway carbohydrate biosynthesis; gluconeogenesis. The protein operates within carbohydrate degradation; glycolysis; D-glyceraldehyde 3-phosphate from glycerone phosphate: step 1/1. Its function is as follows. Involved in the gluconeogenesis. Catalyzes stereospecifically the conversion of dihydroxyacetone phosphate (DHAP) to D-glyceraldehyde-3-phosphate (G3P). The chain is Triosephosphate isomerase from Vibrio vulnificus (strain CMCP6).